A 71-amino-acid polypeptide reads, in one-letter code: MKNDIHPNYKELSVTCSCGQQFVTKSTMGKDAFSIEVCSSCHPFYTGKQKIVDTAGRVDKFNQKFGSFFKR.

Zn(2+)-binding residues include cysteine 16, cysteine 18, cysteine 38, and cysteine 41.

This sequence belongs to the bacterial ribosomal protein bL31 family. Type A subfamily. Part of the 50S ribosomal subunit. The cofactor is Zn(2+).

Functionally, binds the 23S rRNA. In Chromobacterium violaceum (strain ATCC 12472 / DSM 30191 / JCM 1249 / CCUG 213 / NBRC 12614 / NCIMB 9131 / NCTC 9757 / MK), this protein is Large ribosomal subunit protein bL31.